We begin with the raw amino-acid sequence, 2571 residues long: MAEPRTLLLLCVLVLCLSDSSFIRGQTVRSKRCDIHTKFVTHTPCTACAAIRRQLCPWGWSRNFPEKILLDCRYELQLRGAAISLSGCSQECWKDVVQKACCPGYWGSQCFECPGGPATPCSGHGTCLDGIEGNGTCVCQGNFSGSVCQECRDPNRFGPDCQSVCNCVHGVCSHGPRGDGSCRCFAGYTGPHCDQELPVCQSLKCPQNSQCSAEAPTCKCLPGYTQQDNVCLAPDPCQPSACSPLARCSVTPQGQAQCQCPENYHGDGKVCLPRDPCLTNFGGCPSNSTFCLYRGPGKATCMCRPGMTSINNNASEGCHVSCKPHSCDRSATCQVTPDRKTSCVCKNDEVGDGHACYGHLLHEVRRANQNGLVFLRLRAAIAMLEQGCQEILTTSGPFTVLVPSMFSVSSVSSNMNATLAQQLCRQHVIAGEHMLENAGPPSTRRWWTLAGQEVTITFKNMRYAYKYEDQPQQFSIHKANYIAANGVFHTVTALRWQLPPPLPGDSKKTVGQILASTEVFTRFETILENCGLPSILDGPGPFTVFAPSNEAVDSLRDGRLIYLFTAGLSKLQELVRYHIYNHGQLTVEKLISKGRVLTMANQVLTVNISEGGRILLGPGGIPVRRVDVPAANGVIHMLEGILLPPTILPILPKHCDEEQHQTVLGSCVDCQALNTSVCPPNSVKMDIFPKECVYIHDPNGLNVLKKGCADYCNQTITKRGCCKGFFGPDCTQCPGGFSNPCYGKGNCSDGVRGNGACLCFPDYKGIACHICSDPKKHGEQCQEDCGCVHGLCDNRPGSGGVCQQGTCAPGFQGRFCNESMGNCGSTGLAQPCHSDAHCVIQEGVARCVCHDGFEGNGFSCKRSNPCSRPDRGGCSENAECVPGDLGTHHCICHKGWSGDGRICVAIDECGLDTRGGCHADALCSYVGPGQSRCTCKLGFAGNGYECSPIDPCRVGNGGCHGLATCKAVGGGQRVCTCPPHFGGDGFSCYGDIIQELEANAHFSAFSQWFKNSSITLPADSRVTALVPSESAIRRLSLEDQAFWLQPKMLPELARAHFLQGAFSEEELARLNGQQVATLSATTRWQIHNISGKVWVQNATVDVPDLLATNGILHIVSQVLLPPRGDMQTGPGLLQQLDSVPAFRLFGEQLKHHKLVAQIEAAKAYTIFVPTNHSLETQGNNSVLGIDTVRHHVILGEALSVEVLRKGGHRNSLLGPAHWLVFYNHSGQPEVNHMPLEGPLLEAPGSSLFGLSGILAVGSSRCLHSHAEALREKCINCTRKFRCTQGFQLQDTPRKSCVYRSGLSFSRGCSYTCAKKIQVPDCCPGFFGTLCEPCPGGLGGVCSGHGQCQDRFLGNGECRCQEGFHGTACEMCELGRYGPTCSGVCDCDHGLCQEGLRGNGSCVCHAGWQGLRCDQKITDHQCPKKCDPNANCIQDSAGIPACVCAAGYSGNGSYCSEVDPCASGHGGCSPYANCTKVAPGQRTCTCQDGYTGDGELCQEINSCLVHNGGCHVHAECIPTGPQQVSCSCREGYSGDGIQTCKLLDPCSQNNGGCSPYAVCKSTGDGQRTCSCDATHTVGDGITCHGRVGLELLRNKYASFFSLHLLEYKELKGDGPFTVFVPHADLISNMSQDELARIRAHRQLVFRYHVVGCRKLWSQEMLDQGYITTLSGHTLRVSEREGSIYLNDFARVVSSDLEVVNGVLHFIDHVLLPPDVLHWESGAIPIPQRNVTAAAESFGYKIFSRLLTVAGLLPMLQDASHRPFTMLWPTDSALQALPPDRKNWLFHEDHRDKLAAILRGHMIRNIEALASDLPNLGQLRTMHGNTISFSCGLTRPGELIVGEDEAHIVQRHLTFEGGLAYGIDQLLEPPDLGARCDRFEPQPLQMKTCSICGLEPPCPRGSREQGSPETCWRHYSKFWTTPLHSISMRGAYWIPSSFWNRNHMSRGCHRNCVTTVWKPSCCPGHYGINCHACPGGPRSPCSDHGVCLDGIRGSGQCNCHPGFAGTACELCAPGAFGPQCQACRCTQHGRCDEGLGGSGSCFCDEGWTGARCEVQLELQPVCTPPCAPQAVCRLGNSCECSLGYEGDGRVCTVADLCQKGHGGCSKHANCSQVGTVVTCTCLPDYEGDGWSCRARDPCLDGHRGGCSEHADCLNTGPNTRRCECHVGYVGDGLQCLEELEPPVDRCLGGSSPCHTDALCTDLHFQEKQAGVFHIQATSGPYGLTFSEAKEACEGQGAVLASLPQLSAAQQLGFHVCFVGWLANGSAAHPVVTPAADCGNNRVGVVSLGVRKNLSELWDAYCYRVQDVACQCRAGFVGDGISTCNGKLLDVLAATANFSTFYGMLLGYANATQRGLEFMDFLEDELTYKTLFVPVNKGFVDNMTLSGPDLELHASNATFLSINASRGTLLPAHSGLSLFISDTGPDNTSLVPLAPGAVVVSHVIVWDIMAFNGIIHALASPLLMPPQTRAVLGSEPPPVALSLGVVVTSGTLLGLVAGALYLRARGKPPGFSFSAFQAEDNADDDFSPWQEGTSPTLVSVPNPVFGSSDIFCEPFDDSVLEEDFPDTQRVLKVK.

An N-terminal signal peptide occupies residues 1–25 (MAEPRTLLLLCVLVLCLSDSSFIRG). Residues 26–2475 (QTVRSKRCDI…RAVLGSEPPP (2450 aa)) are Extracellular-facing. 4 consecutive EGF-like domains span residues 111–149 (FECP…SVCQ), 157–194 (FGPD…PHCD), 196–232 (ELPV…NVCL), and 233–272 (APDP…KVCL). Cystine bridges form between cysteine 113/cysteine 127, cysteine 121/cysteine 137, cysteine 139/cysteine 148, cysteine 161/cysteine 172, cysteine 165/cysteine 182, cysteine 184/cysteine 193, cysteine 200/cysteine 211, cysteine 205/cysteine 218, cysteine 220/cysteine 231, cysteine 237/cysteine 248, cysteine 242/cysteine 258, and cysteine 260/cysteine 271. N-linked (GlcNAc...) asparagine glycans are attached at residues asparagine 134 and asparagine 142. Residues asparagine 287, asparagine 313, asparagine 416, asparagine 607, asparagine 674, asparagine 713, and asparagine 746 are each glycosylated (N-linked (GlcNAc...) asparagine). FAS1 domains follow at residues 357-495 (YGHL…TALR) and 507-642 (KKTV…EGIL). Residues 729–769 (DCTQCPGGFSNPCYGKGNCSDGVRGNGACLCFPDYKGIACH) enclose the EGF-like 5 domain. Cystine bridges form between cysteine 733-cysteine 747, cysteine 741-cysteine 757, and cysteine 759-cysteine 768. Asparagine 817 carries an N-linked (GlcNAc...) asparagine glycan. EGF-like domains are found at residues 819–859 (SMGN…NGFS), 862–904 (RSNP…RICV), 905–947 (AIDE…YECS), and 948–987 (PIDP…DGFS). 10 cysteine pairs are disulfide-bonded: cysteine 823/cysteine 838, cysteine 832/cysteine 847, cysteine 866/cysteine 880, cysteine 874/cysteine 890, cysteine 892/cysteine 903, cysteine 909/cysteine 923, cysteine 917/cysteine 933, cysteine 935/cysteine 946, cysteine 952/cysteine 965, and cysteine 959/cysteine 975. FAS1 domains are found at residues 989-1119 (YGDI…SQVL) and 1129-1254 (GPGL…SGIL). Residues asparagine 1011, asparagine 1088, asparagine 1097, asparagine 1171, asparagine 1179, asparagine 1223, and asparagine 1275 are each glycosylated (N-linked (GlcNAc...) asparagine). The region spanning 1328–1393 (TLCEPCPGGL…CDCDHGLCQE (66 aa)) is the Laminin EGF-like 1 domain. 18 disulfides stabilise this stretch: cysteine 1333-cysteine 1347, cysteine 1341-cysteine 1357, cysteine 1359-cysteine 1368, cysteine 1380-cysteine 1391, cysteine 1384-cysteine 1401, cysteine 1403-cysteine 1412, cysteine 1421-cysteine 1431, cysteine 1425-cysteine 1441, cysteine 1443-cysteine 1454, cysteine 1460-cysteine 1473, cysteine 1467-cysteine 1483, cysteine 1485-cysteine 1496, cysteine 1502-cysteine 1515, cysteine 1509-cysteine 1525, cysteine 1527-cysteine 1539, cysteine 1545-cysteine 1558, cysteine 1552-cysteine 1568, and cysteine 1570-cysteine 1582. N-linked (GlcNAc...) asparagine glycosylation is present at asparagine 1398. EGF-like domains follow at residues 1417 to 1455 (TDHQ…SYCS), 1456 to 1497 (EVDP…ELCQ), 1498 to 1540 (EINS…QTCK), and 1541 to 1583 (LLDP…ITCH). N-linked (GlcNAc...) asparagine glycans are attached at residues asparagine 1450 and asparagine 1472. 2 FAS1 domains span residues 1583–1709 (HGRV…DHVL) and 1725–1865 (PQRN…DQLL). 2 N-linked (GlcNAc...) asparagine glycosylation sites follow: asparagine 1627 and asparagine 1728. Positions 1966 to 2031 (INCHACPGGP…RCTQHGRCDE (66 aa)) constitute a Laminin EGF-like 2 domain. 17 disulfide bridges follow: cysteine 1971-cysteine 1985, cysteine 1979-cysteine 1995, cysteine 1997-cysteine 2006, cysteine 2018-cysteine 2029, cysteine 2023-cysteine 2039, cysteine 2041-cysteine 2050, cysteine 2060-cysteine 2070, cysteine 2064-cysteine 2076, cysteine 2078-cysteine 2089, cysteine 2095-cysteine 2108, cysteine 2102-cysteine 2117, cysteine 2119-cysteine 2130, cysteine 2136-cysteine 2150, cysteine 2144-cysteine 2160, cysteine 2162-cysteine 2173, cysteine 2230-cysteine 2299, and cysteine 2254-cysteine 2275. EGF-like domains lie at 2056 to 2090 (LQPV…RVCT), 2091 to 2131 (VADL…WSCR), and 2132 to 2174 (ARDP…LQCL). N-linked (GlcNAc...) asparagine glycosylation occurs at asparagine 2107. In terms of domain architecture, Link spans 2208–2301 (GVFHIQATSG…SELWDAYCYR (94 aa)). N-linked (GlcNAc...) asparagine glycans are attached at residues asparagine 2261, asparagine 2290, asparagine 2334, asparagine 2347, asparagine 2379, asparagine 2393, asparagine 2400, and asparagine 2424. The FAS1 7 domain maps to 2322–2459 (NGKLLDVLAA…GIIHALASPL (138 aa)). The helical transmembrane segment at 2476–2496 (VALSLGVVVTSGTLLGLVAGA) threads the bilayer. Residues 2497–2571 (LYLRARGKPP…PDTQRVLKVK (75 aa)) lie on the Cytoplasmic side of the membrane.

Interacts with CHID1.

The protein resides in the membrane. In terms of biological role, acts as a scavenger receptor for acetylated low density lipoprotein. Binds to both Gram-positive and Gram-negative bacteria and may play a role in defense against bacterial infection. When inhibited in endothelial tube formation assays, there is a marked decrease in cell-cell interactions, suggesting a role in angiogenesis. Involved in the delivery of newly synthesized CHID1/SI-CLP from the biosynthetic compartment to the endosomal/lysosomal system. This chain is Stabilin-1 (Stab1), found in Mus musculus (Mouse).